Reading from the N-terminus, the 429-residue chain is Histidine--tRNA ligase (429 aa).

This sequence belongs to the class-II aminoacyl-tRNA synthetase family. In terms of assembly, homodimer.

It localises to the cytoplasm. It carries out the reaction tRNA(His) + L-histidine + ATP = L-histidyl-tRNA(His) + AMP + diphosphate + H(+). This is Histidine--tRNA ligase from Streptococcus mutans serotype c (strain ATCC 700610 / UA159).